Consider the following 390-residue polypeptide: RNA binding protein fox-1 homolog 2 (390 aa).

Residues methionine 1–asparagine 127 are disordered. Polar residues-rich tracts occupy residues serine 18–proline 28 and glycine 65–threonine 95. Histidine 67 carries the phosphothreonine modification. A compositionally biased stretch (low complexity) spans glycine 97–lysine 117. An RRM domain is found at lysine 121–alanine 197. Glycine 249, glycine 267, phenylalanine 268, alanine 277, and arginine 281 each carry omega-N-methylarginine. 2 positions are modified to asymmetric dimethylarginine: arginine 297 and arginine 329. Asymmetric dimethylarginine; alternate is present on residues arginine 381 and arginine 386. Omega-N-methylarginine; alternate is present on residues arginine 381 and arginine 386.

As to quaternary structure, interacts with ER-alpha N-terminal activation domain. Interacts with RBPMS; the interaction allows cooperative assembly of stable cell-specific alternative splicing regulatory complexes.

It is found in the nucleus. The protein localises to the cytoplasm. Functionally, RNA-binding protein that regulates alternative splicing events by binding to 5'-UGCAUGU-3' elements. Prevents binding of U2AF2 to the 3'-splice site. Regulates alternative splicing of tissue-specific exons and of differentially spliced exons during erythropoiesis. RNA-binding protein that seems to act as a coregulatory factor of ER-alpha. Together with RNA binding proteins RBPMS and MBNL1/2, activates vascular smooth muscle cells alternative splicing events. The sequence is that of RNA binding protein fox-1 homolog 2 (RBFOX2) from Homo sapiens (Human).